The primary structure comprises 327 residues: Ubiquinone biosynthesis protein COQ4, mitochondrial (327 aa).

Residues His-208, Asp-209, His-212, and Glu-224 each coordinate Zn(2+).

It belongs to the COQ4 family. As to quaternary structure, component of a multi-subunit COQ enzyme complex, composed of at least COQ3, COQ4, COQ5, COQ6, COQ7 and COQ9. Requires Zn(2+) as cofactor.

The protein resides in the mitochondrion inner membrane. It carries out the reaction a 4-hydroxy-3-methoxy-5-(all-trans-polyprenyl)benzoate + H(+) = a 2-methoxy-6-(all-trans-polyprenyl)phenol + CO2. The protein operates within cofactor biosynthesis; ubiquinone biosynthesis. Lyase that catalyzes the C1-decarboxylation of 4-hydroxy-3-methoxy-5-(all-trans-polyprenyl)benzoic acid into 2-methoxy-6-(all-trans-polyprenyl)phenol during ubiquinone biosynthesis. The polypeptide is Ubiquinone biosynthesis protein COQ4, mitochondrial (Lachancea thermotolerans (strain ATCC 56472 / CBS 6340 / NRRL Y-8284) (Yeast)).